The chain runs to 153 residues: Aspartate carbamoyltransferase regulatory chain (153 aa).

Zn(2+) is bound by residues Cys109, Cys114, Cys138, and Cys141.

The protein belongs to the PyrI family. As to quaternary structure, contains catalytic and regulatory chains. The cofactor is Zn(2+).

In terms of biological role, involved in allosteric regulation of aspartate carbamoyltransferase. In Edwardsiella ictaluri (strain 93-146), this protein is Aspartate carbamoyltransferase regulatory chain.